Consider the following 198-residue polypeptide: Auxin-binding protein 1 (198 aa).

Positions 1–33 (MIVLSVGSASSSPIVVVFSVALLLFYFSETSLG) are cleaved as a signal peptide. Cys36 and Cys189 form a disulfide bridge. Zn(2+) is bound by residues His92, His94, and Glu98. An N-linked (GlcNAc...) asparagine glycan is attached at Asn130. Position 141 (His141) interacts with Zn(2+). Residues 195–198 (KDEL) carry the Prevents secretion from ER motif.

As to quaternary structure, homodimer. May interact with the GPI-anchored plasma membrane protein SKU5 and its family members. Interacts with TMK1 (via extracellular domain). Post-translationally, glycosylated. In terms of processing, ubiquitinated by RMA2, leading to proteasomal degradation.

It localises to the endoplasmic reticulum lumen. The protein resides in the cell membrane. In terms of biological role, auxin receptor that controls cell elongation and cell division. Involved in embryonic morphogenesis. Acts on the cell cycle, endocycle, cell plate formation, and cell expansion and contributes to the control of auxin-related gene expression. Controls root meristem size and mediates auxin responsiveness. Involved in activation of ROP GTPases in response to auxin and regulation of clathrin-mediated endocytosis in roots. Acts as a positive factor in clathrin recruitment to the plasma membrane, thereby promoting endocytosis. Upon auxin binding, restricts the internalization of PIN proteins by inhibiting clathrin-mediated endocytosis. Promotes auxin-triggered phosphorylation status modulation of RAF-like kinases (e.g. RAF20 and RAF24). Involved in the regulation of polar auxin transport. Behaves as a negative regulator of the SCF(TIR1/AFB) signaling pathway, protecting AUX/IAA repressors from degradation. Regulates the expression of cell wall remodeling genes via an SCF(TIR1/AFB)-dependent pathway. Involved in the modulation of hemicellulose xyloglucan structure. Required for rapid auxin-mediated re-orientation of microtubules to regulate cell elongation in roots and dark-grown hypocotyls as well as asymmetric growth during gravitropic responses. Involved in the shade avoidance response. Forms with TMK1 a cell surface auxin perception complex that activates ROP signaling pathways. ABP1 sensing of auxin is important for the ABP1-TMK1 complex formation. Interacts functionally with phytochrome to regulate growth. In Arabidopsis thaliana (Mouse-ear cress), this protein is Auxin-binding protein 1.